An 844-amino-acid chain; its full sequence is MRLSELHTGDQAVIVRVEGRGVFRKRILEMGFVHGKTITVVQCAPLRDPVYYRIMDYNVSLRREDAAKIEVELISSNATSSPASNDIGEQSANPDSNESIPTNPTEDISAKTKSEIEIEVKPNGHVIRVALIGNPNCGKTSIFNRASGAHEHVGNYSGVTVEAKEGLFRHGDYKIEIIDLPGTYSLSPYSPEELYIRQYLSEETRPDLVLNVVDTCNLERNLYLTLQLKEMGLPVVIALNMFDEFEKKGDTFDYPALSAMLGIPMVPTVGRTGQGLPELFDTLISIHEGRNKIIRPIRINYGSIIEPAVEALTEKINNQLSLPYSLPARYIAVKLLEGDKEMNRFVGEQPKGLFILSARDFALREIDEHLTVARDAESIITDQRYGFIAGALKETYRSSYKQLKTLTDKIDHIVTHRVLGFPLFLLFMFIMFEATFVLGRYPMDWIEAGVGWIGSMVNTFMPDGSFKDLIVDGVIGGVGGVIVFLPNILILYFFISLMEDSGYMARAAFIMDKIMHRMGLHGKSFIPLIMGFGCNVPAIMATRTIESKQSRMITMLVTPLMSCSARLPVYLLLAGAFFPDSAGLVLFGLYFLGILLAVLLARLFKKTLFKVEDVPFVMELPPYRMPTSRSVIVHMWNKAAQYLRKMGSIILLASIVIWFLSYYPRYSEEAVLISQIEQIEGNPQLDEEKKTSQIEELNRKAHIEQQEQSYIGRFGKAVQPVLAPIGFDWKMSVSLLTGMAAKEVVVSTLGVIYTGDSDDSDEAARRLGERIREDRDAEGNHTFSPIIALALMAFVLIYFPCIATVVAIGRESGHWKWAVFSIIYSCSLAWIVSFLIYRIGILFF.

The feoA stretch occupies residues Met1–Leu73. The interval Ile74–Phe844 is feoB. A compositionally biased stretch (polar residues) spans Thr79 to Glu106. The disordered stretch occupies residues Thr79–Ala110. The region spanning Val126–Gly289 is the FeoB-type G domain. GTP-binding positions include Gly133–Thr140, Gly158–Glu162, Asp179–Gly182, Asn240–Asp243, and Val269–Arg271. 8 consecutive transmembrane segments (helical) span residues Val418–Leu438, Ile475–Ile495, Leu520–Met540, Pro559–Pro579, Ser581–Ala601, Met646–Tyr666, Ile786–Val806, and Trp817–Tyr837.

This sequence in the N-terminal section; belongs to the FeoA family. It in the C-terminal section; belongs to the TRAFAC class TrmE-Era-EngA-EngB-Septin-like GTPase superfamily. FeoB GTPase (TC 9.A.8) family.

Its subcellular location is the cell inner membrane. Probable transporter of a GTP-driven Fe(2+) uptake system. The sequence is that of Fe(2+) transport protein A/Fe(2+) transporter FeoB fusion protein from Porphyromonas gingivalis (strain ATCC BAA-308 / W83).